Consider the following 405-residue polypeptide: Aminodeoxyfutalosine deaminase (405 aa).

A divalent metal cation is bound by residues histidine 61 and histidine 63. Glutamate 141, serine 145, and histidine 179 together coordinate substrate. An a divalent metal cation-binding site is contributed by histidine 206. Glutamate 209 serves as the catalytic Proton donor. Residue aspartate 306 coordinates a divalent metal cation.

The protein belongs to the metallo-dependent hydrolases superfamily. Requires a divalent metal cation as cofactor.

The enzyme catalyses 6-amino-6-deoxyfutalosine + H2O + H(+) = futalosine + NH4(+). Its pathway is quinol/quinone metabolism; menaquinone biosynthesis. Functionally, catalyzes the deamination of aminodeoxyfutalosine (AFL) into futalosine (FL), a step in the biosynthesis of menaquinone (MK, vitamin K2). To a lesser extent, can also deaminate 5'-methylthioadenosine. This is Aminodeoxyfutalosine deaminase from Nitratiruptor sp. (strain SB155-2).